The following is a 458-amino-acid chain: MQIAQVFGCGRLNGEVKVSGAKNAATKLLVASLLSDQKCTLRNVPDIGDVSLTVELCKSLGAHVSWDKETEVLEIYTPEIQCTRVPPTFSNVNRIPILLLGALLGRCPEGVYVPTVGGDAIGERTLNFHFEGLKQLGVQISSDSSGYYAKAPRGLKGNYIHLPYPSVGATENLILAAIHAKGRTVIKNVALEAEILDLVLFLQKAGADITTDNDRTIDIFGTGGLGSVDHTILPDKIEAASFGMAAVVSGGRVFVRNAKQELLIPFLKMLRSIGGGFLVSESGIEFFQERPLVGGVVLETDVHPGFLTDWQQPFAVLLSQAQGSSVIHETVHENRLGYLHGLQHMGAECQLFHQCLSTKACRYAIGNFPHSAVIHGATPLWASHLVIPDLRAGFAYVMAALIAEGGGSIIENTHLLDRGYTNWVGKLRSLGAKIQIFDMEQEELTTSPKSLALRDASL.

22–23 (KN) provides a ligand contact to phosphoenolpyruvate. R94 contacts UDP-N-acetyl-alpha-D-glucosamine. Residue D119 is the Proton donor of the active site. UDP-N-acetyl-alpha-D-glucosamine-binding residues include D309 and V331.

The protein belongs to the EPSP synthase family. MurA subfamily.

It is found in the cytoplasm. The catalysed reaction is phosphoenolpyruvate + UDP-N-acetyl-alpha-D-glucosamine = UDP-N-acetyl-3-O-(1-carboxyvinyl)-alpha-D-glucosamine + phosphate. The protein operates within cell wall biogenesis; peptidoglycan biosynthesis. In terms of biological role, cell wall formation. Adds enolpyruvyl to UDP-N-acetylglucosamine. The chain is UDP-N-acetylglucosamine 1-carboxyvinyltransferase from Chlamydia pneumoniae (Chlamydophila pneumoniae).